Reading from the N-terminus, the 305-residue chain is Oxygen-dependent coproporphyrinogen-III oxidase (305 aa).

Residue Ser-98 coordinates substrate. A divalent metal cation-binding residues include His-102 and His-112. His-112 functions as the Proton donor in the catalytic mechanism. Residue 114–116 (NVR) participates in substrate binding. The a divalent metal cation site is built by His-151 and His-181. The segment at 246–281 (YVEFNLVYDRGTLFGLQSGGRTESILMSMPPLARWE) is important for dimerization. 264 to 266 (GGR) contacts substrate.

Belongs to the aerobic coproporphyrinogen-III oxidase family. Homodimer. It depends on a divalent metal cation as a cofactor.

The protein localises to the cytoplasm. It catalyses the reaction coproporphyrinogen III + O2 + 2 H(+) = protoporphyrinogen IX + 2 CO2 + 2 H2O. The protein operates within porphyrin-containing compound metabolism; protoporphyrin-IX biosynthesis; protoporphyrinogen-IX from coproporphyrinogen-III (O2 route): step 1/1. Involved in the heme biosynthesis. Catalyzes the aerobic oxidative decarboxylation of propionate groups of rings A and B of coproporphyrinogen-III to yield the vinyl groups in protoporphyrinogen-IX. The sequence is that of Oxygen-dependent coproporphyrinogen-III oxidase from Vibrio campbellii (strain ATCC BAA-1116).